Here is a 177-residue protein sequence, read N- to C-terminus: Respiratory growth induced protein 1 (177 aa).

Residues 1–37 are disordered; sequence MGRRKSQAAAERNLEPIKISTDSIKKRPRRDSNEPPF.

Belongs to the RGI1 family.

It is found in the cell membrane. Involved in the control of energetic metabolism and significantly contribute to cell fitness, especially under respiratory growth conditions. The sequence is that of Respiratory growth induced protein 1 (RGI1) from Komagataella phaffii (strain GS115 / ATCC 20864) (Yeast).